Consider the following 315-residue polypeptide: Cytochrome f (315 aa).

An N-terminal signal peptide occupies residues 1-36; that stretch reads MKQSLLSVLTKKSLRLLAALFLVVTSVFSLPQAAQA. Phe37, Cys57, Cys60, and His61 together coordinate heme. The chain crosses the membrane as a helical span at residues 281-301; it reads IKWLMVFFSAIMISQTLLVLK.

It belongs to the cytochrome f family. In terms of assembly, the 4 large subunits of the cytochrome b6-f complex are cytochrome b6, subunit IV (17 kDa polypeptide, PetD), cytochrome f and the Rieske protein, while the 4 small subunits are PetG, PetL, PetM and PetN. The complex functions as a dimer. The cofactor is heme.

It localises to the cellular thylakoid membrane. Its function is as follows. Component of the cytochrome b6-f complex, which mediates electron transfer between photosystem II (PSII) and photosystem I (PSI), cyclic electron flow around PSI, and state transitions. The chain is Cytochrome f from Acaryochloris marina (strain MBIC 11017).